A 58-amino-acid chain; its full sequence is Large ribosomal subunit protein eL24 (58 aa).

Residues Cys-6, Cys-9, Cys-32, and Cys-36 each contribute to the Zn(2+) site. The segment at 6–36 (CSFCGAEIPPGYGIMYVRNDGTIQRYCSRKC) adopts a C4-type zinc-finger fold.

This sequence belongs to the eukaryotic ribosomal protein eL24 family. As to quaternary structure, part of the 50S ribosomal subunit. Forms a cluster with proteins L3 and L14. Zn(2+) is required as a cofactor.

In terms of biological role, binds to the 23S rRNA. The polypeptide is Large ribosomal subunit protein eL24 (Pyrobaculum neutrophilum (strain DSM 2338 / JCM 9278 / NBRC 100436 / V24Sta) (Thermoproteus neutrophilus)).